We begin with the raw amino-acid sequence, 145 residues long: Aminoglycoside N(6')-acetyltransferase type 1 (145 aa).

The region spanning 1–145 is the N-acetyltransferase domain; that stretch reads MDIRQMNRTH…ERVIFYRKRC (145 aa). Residues Trp-22, His-25, Tyr-66, and Glu-79 each coordinate substrate. Residues 81–83 and 89–94 each bind acetyl-CoA; these read IFV and QRGVAK. Asp-115 is a substrate binding site. Asn-120 contributes to the acetyl-CoA binding site. Glu-136 contributes to the substrate binding site.

In terms of assembly, homodimer.

It carries out the reaction kanamycin B + acetyl-CoA = N(6')-acetylkanamycin B + CoA + H(+). Functionally, catalyzes the transfer of an acetyl group from acetyl-CoA to the 6'-amino group of aminoglycoside molecules conferring resistance to antibiotics containing the purpurosamine ring. The protein is Aminoglycoside N(6')-acetyltransferase type 1 of Salmonella typhimurium (strain LT2 / SGSC1412 / ATCC 700720).